The primary structure comprises 456 residues: tRNA-2-methylthio-N(6)-dimethylallyladenosine synthase (456 aa).

Residues 17-135 (KLYLIQSFGC…LPRMIHQVQE (119 aa)) enclose the MTTase N-terminal domain. 6 residues coordinate [4Fe-4S] cluster: cysteine 26, cysteine 62, cysteine 96, cysteine 172, cysteine 176, and cysteine 179. Positions 158 to 387 (RKDKLKAWVT…IELQNLISLE (230 aa)) constitute a Radical SAM core domain. In terms of domain architecture, TRAM spans 390-453 (QREEGRVLEV…PNLLEGEVVP (64 aa)).

It belongs to the methylthiotransferase family. MiaB subfamily. Monomer. [4Fe-4S] cluster serves as cofactor.

The protein localises to the cytoplasm. The catalysed reaction is N(6)-dimethylallyladenosine(37) in tRNA + (sulfur carrier)-SH + AH2 + 2 S-adenosyl-L-methionine = 2-methylsulfanyl-N(6)-dimethylallyladenosine(37) in tRNA + (sulfur carrier)-H + 5'-deoxyadenosine + L-methionine + A + S-adenosyl-L-homocysteine + 2 H(+). In terms of biological role, catalyzes the methylthiolation of N6-(dimethylallyl)adenosine (i(6)A), leading to the formation of 2-methylthio-N6-(dimethylallyl)adenosine (ms(2)i(6)A) at position 37 in tRNAs that read codons beginning with uridine. The protein is tRNA-2-methylthio-N(6)-dimethylallyladenosine synthase of Desulforamulus reducens (strain ATCC BAA-1160 / DSM 100696 / MI-1) (Desulfotomaculum reducens).